Consider the following 346-residue polypeptide: Dihydroorotase (346 aa).

The Zn(2+) site is built by H14 and H16. Residues 16-18 (HLR) and N42 contribute to the substrate site. The Zn(2+) site is built by K100, H137, and H175. The residue at position 100 (K100) is an N6-carboxylysine. H137 provides a ligand contact to substrate. L220 serves as a coordination point for substrate. D248 is a Zn(2+) binding site. Residue D248 is part of the active site. Substrate is bound by residues H252 and A264.

Belongs to the metallo-dependent hydrolases superfamily. DHOase family. Class II DHOase subfamily. Homodimer. It depends on Zn(2+) as a cofactor.

It catalyses the reaction (S)-dihydroorotate + H2O = N-carbamoyl-L-aspartate + H(+). The protein operates within pyrimidine metabolism; UMP biosynthesis via de novo pathway; (S)-dihydroorotate from bicarbonate: step 3/3. Catalyzes the reversible cyclization of carbamoyl aspartate to dihydroorotate. This Novosphingobium aromaticivorans (strain ATCC 700278 / DSM 12444 / CCUG 56034 / CIP 105152 / NBRC 16084 / F199) protein is Dihydroorotase.